The sequence spans 460 residues: Fumarate hydratase class II (460 aa).

Residues 95–97, 126–129, 136–138, and Thr184 each bind substrate; these read SGT, HPND, and SSN. His185 acts as the Proton donor/acceptor in catalysis. Ser315 is an active-site residue. Substrate-binding positions include Ser316 and 321–323; that span reads KVN.

This sequence belongs to the class-II fumarase/aspartase family. Fumarase subfamily. In terms of assembly, homotetramer.

Its subcellular location is the cytoplasm. The enzyme catalyses (S)-malate = fumarate + H2O. It participates in carbohydrate metabolism; tricarboxylic acid cycle; (S)-malate from fumarate: step 1/1. In terms of biological role, involved in the TCA cycle. Catalyzes the stereospecific interconversion of fumarate to L-malate. The protein is Fumarate hydratase class II of Chlamydia pneumoniae (Chlamydophila pneumoniae).